Here is a 105-residue protein sequence, read N- to C-terminus: Integration host factor subunit beta (105 aa).

This sequence belongs to the bacterial histone-like protein family. As to quaternary structure, heterodimer of an alpha and a beta chain.

In terms of biological role, this protein is one of the two subunits of integration host factor, a specific DNA-binding protein that functions in genetic recombination as well as in transcriptional and translational control. The chain is Integration host factor subunit beta from Nitrosomonas eutropha (strain DSM 101675 / C91 / Nm57).